The primary structure comprises 48 residues: Delta-stichotoxin-Hcr1a (48 aa).

Intrachain disulfides connect cysteine 3–cysteine 43, cysteine 5–cysteine 33, and cysteine 26–cysteine 44. Lysine 48 carries the post-translational modification Lysine amide; partial; in Delta-stichotoxin-Hcr1f.

This sequence belongs to the sea anemone sodium channel inhibitory toxin family. Type II subfamily. In terms of assembly, probably composed of two peptide chains of 12 and 35 residues connected by two disulfide bonds (Cys-3-Cys-43 and Cys-5-Cys-33). In terms of processing, delta-SHTX-Hcr1f (RTX-VI) may be the result of post-translational modification of delta-SHTX-Hcr1a (RTX-III), which would consist of Arg-13 cleavage.

The protein localises to the secreted. It is found in the nematocyst. Functionally, binds to site 3 of voltage-gated sodium channels and inhibits the inactivation process. Specifically inhibits mammalian Nav1.3/SCN3A and Nav1.6/SCN8A sodium channels, as well as insect BgNav1 and VdNav1 sodium channels. In terms of biological role, binds to site 3 of voltage-gated sodium channels and inhibits the inactivation process. Specifically inhibits mammalian Nav1.2/SCN3A (low inhibition) and Nav1.6/SCN8A sodium channels, as well as insect BgNav1 and VdNav1 sodium channels. This chain is Delta-stichotoxin-Hcr1a, found in Radianthus crispa (Leathery sea anemone).